Reading from the N-terminus, the 547-residue chain is NXPE family member 1 (547 aa).

The N-terminal stretch at 1 to 21 (MSSNTMLQKTLLILISFSVVT) is a signal peptide. Residues asparagine 39 and asparagine 211 are each glycosylated (N-linked (GlcNAc...) asparagine).

Belongs to the NXPE family.

The protein resides in the secreted. In Homo sapiens (Human), this protein is NXPE family member 1 (NXPE1).